The chain runs to 735 residues: Delta-1-pyrroline-5-carboxylate synthase 2 (735 aa).

The glutamate 5-kinase stretch occupies residues 1-315 (MGRGGIGGAG…WGCSKEATAR (315 aa)). 3 residues coordinate substrate: Ser-79, Asp-176, and Asn-195. Residues 215 to 216 (SD), 221 to 226 (YSGPPS), and 255 to 261 (RGGMQAK) each bind ATP. A gamma-glutamyl phosphate reductase region spans residues 316–735 (EMAVAARDCS…VYTHRELPLQ (420 aa)).

In the N-terminal section; belongs to the glutamate 5-kinase family. It in the C-terminal section; belongs to the gamma-glutamyl phosphate reductase family.

The catalysed reaction is L-glutamate + ATP = L-glutamyl 5-phosphate + ADP. It catalyses the reaction L-glutamate 5-semialdehyde + phosphate + NADP(+) = L-glutamyl 5-phosphate + NADPH + H(+). Its pathway is amino-acid biosynthesis; L-proline biosynthesis; L-glutamate 5-semialdehyde from L-glutamate: step 1/2. It functions in the pathway amino-acid biosynthesis; L-proline biosynthesis; L-glutamate 5-semialdehyde from L-glutamate: step 2/2. Feedback regulated by proline. Its function is as follows. P5CS plays a key role in proline biosynthesis, leading to osmoregulation in plants. Involved in abiotic stress tolerance. The chain is Delta-1-pyrroline-5-carboxylate synthase 2 from Oryza sativa subsp. japonica (Rice).